We begin with the raw amino-acid sequence, 148 residues long: Lysozyme C-1 (148 aa).

An N-terminal signal peptide occupies residues 1–18 (MKALLVLGFLLLSASVQA). The C-type lysozyme domain occupies 19–148 (KIYERCQFAR…LSGYIRNCGV (130 aa)). Intrachain disulfides connect cysteine 24/cysteine 146, cysteine 48/cysteine 134, cysteine 83/cysteine 99, and cysteine 95/cysteine 113. Residues glutamate 53 and aspartate 71 contribute to the active site.

It belongs to the glycosyl hydrolase 22 family. As to quaternary structure, monomer. As to expression, expressed in lung, small intestine and spleen.

The protein localises to the secreted. It carries out the reaction Hydrolysis of (1-&gt;4)-beta-linkages between N-acetylmuramic acid and N-acetyl-D-glucosamine residues in a peptidoglycan and between N-acetyl-D-glucosamine residues in chitodextrins.. Its function is as follows. Lysozymes have primarily a bacteriolytic function; those in tissues and body fluids are associated with the monocyte-macrophage system and enhance the activity of immunoagents. In the intestine they may also have a digestive function. The protein is Lysozyme C-1 (Lyz1) of Rattus norvegicus (Rat).